Consider the following 415-residue polypeptide: Multidrug resistance protein MdtA (415 aa).

An N-terminal signal peptide occupies residues Met1 to Ala21. Disordered regions lie at residues Ser32–Ala60 and Glu392–Ser415. Residues Pro399–Ser415 are compositionally biased toward basic and acidic residues.

The protein belongs to the membrane fusion protein (MFP) (TC 8.A.1) family. As to quaternary structure, part of a tripartite efflux system composed of MdtA, MdtB and MdtC.

The protein resides in the cell inner membrane. The MdtABC tripartite complex confers resistance against novobiocin and deoxycholate. In Escherichia coli (strain 55989 / EAEC), this protein is Multidrug resistance protein MdtA.